The following is a 1090-amino-acid chain: Telomerase reverse transcriptase (1090 aa).

The tract at residues Gly-184 to Ser-301 is disordered. Positions Pro-190–Arg-204 are enriched in basic residues. Composition is skewed to basic and acidic residues over residues Glu-218–Thr-232 and His-252–Val-262. Residues Lys-281–Glu-294 show a composition bias toward pro residues. A TFLY; involved in RNA binding motif is present at residues Thr-316–Tyr-321. 2 interaction with RNA template regions span residues Leu-371–Phe-376 and Trp-477–Tyr-503. The Reverse transcriptase domain maps to Ser-569–Leu-893. Asp-666, Asp-826, and Asp-827 together coordinate Mg(2+).

The protein belongs to the reverse transcriptase family. Telomerase subfamily. Catalytic subunit of the telomerase holoenzyme complex composed minimally of TERT and the telomerase RNA template component (TERC). Expressed at highest levels in gonads and brain, and at lower levels in heart, spleen, kidney, gill, muscle and skin. Detected in embryonic stem cell lines before and after differentiation. Isoform F is expressed in gonads, with higher levels in testis relative to ovary, but is not detected in other tissues. Isoform B is expressed predominantly in testis. Isoform C is up-regulated in embryonic stem cell lines after differentiation.

The protein resides in the nucleus. The protein localises to the chromosome. It localises to the telomere. It carries out the reaction DNA(n) + a 2'-deoxyribonucleoside 5'-triphosphate = DNA(n+1) + diphosphate. Its function is as follows. Telomerase is a ribonucleoprotein enzyme essential for the replication of chromosome termini in most eukaryotes. It elongates telomeres. It is a reverse transcriptase that adds simple sequence repeats to chromosome ends by copying a template sequence within the RNA component of the enzyme. In Oryzias latipes (Japanese rice fish), this protein is Telomerase reverse transcriptase.